Consider the following 158-residue polypeptide: Transcription elongation factor GreA (158 aa).

The protein belongs to the GreA/GreB family.

Necessary for efficient RNA polymerase transcription elongation past template-encoded arresting sites. The arresting sites in DNA have the property of trapping a certain fraction of elongating RNA polymerases that pass through, resulting in locked ternary complexes. Cleavage of the nascent transcript by cleavage factors such as GreA or GreB allows the resumption of elongation from the new 3'terminus. GreA releases sequences of 2 to 3 nucleotides. The polypeptide is Transcription elongation factor GreA (Psychrobacter cryohalolentis (strain ATCC BAA-1226 / DSM 17306 / VKM B-2378 / K5)).